The primary structure comprises 387 residues: 26S proteasome regulatory subunit 6B homolog (387 aa).

175–182 is an ATP binding site; it reads GPPGTGKT.

It belongs to the AAA ATPase family. The 26S proteasome consists of a 20S proteasome core and two 19S regulatory subunits. The 20S proteasome core is composed of 28 subunits that are arranged in four stacked rings, resulting in a barrel-shaped structure. The two end rings are each formed by seven alpha subunits, and the two central rings are each formed by seven beta subunits. The catalytic chamber with the active sites is on the inside of the barrel.

It localises to the cytoplasm. It is found in the nucleus. In terms of biological role, acts as a regulatory subunit of the 26S proteasome which degrades poly-ubiquitinated proteins in the cytoplasm and in the nucleus. It is essential for the regulated turnover of proteins and for the removal of misfolded proteins. The proteasome is a multicatalytic proteinase complex that is characterized by its ability to cleave peptides with Arg, Phe, Tyr, Leu, and Glu adjacent to the leaving group at neutral or slightly basic pH. This chain is 26S proteasome regulatory subunit 6B homolog, found in Encephalitozoon cuniculi (strain GB-M1) (Microsporidian parasite).